A 65-amino-acid polypeptide reads, in one-letter code: Large ribosomal subunit protein uL29 (65 aa).

It belongs to the universal ribosomal protein uL29 family.

The sequence is that of Large ribosomal subunit protein uL29 from Buchnera aphidicola subsp. Baizongia pistaciae (strain Bp).